Reading from the N-terminus, the 236-residue chain is 1-(5-phosphoribosyl)-5-[(5-phosphoribosylamino)methylideneamino] imidazole-4-carboxamide isomerase (236 aa).

Residue D8 is the Proton acceptor of the active site. D129 serves as the catalytic Proton donor.

The protein belongs to the HisA/HisF family.

It is found in the cytoplasm. It carries out the reaction 1-(5-phospho-beta-D-ribosyl)-5-[(5-phospho-beta-D-ribosylamino)methylideneamino]imidazole-4-carboxamide = 5-[(5-phospho-1-deoxy-D-ribulos-1-ylimino)methylamino]-1-(5-phospho-beta-D-ribosyl)imidazole-4-carboxamide. The protein operates within amino-acid biosynthesis; L-histidine biosynthesis; L-histidine from 5-phospho-alpha-D-ribose 1-diphosphate: step 4/9. In Ruminiclostridium cellulolyticum (strain ATCC 35319 / DSM 5812 / JCM 6584 / H10) (Clostridium cellulolyticum), this protein is 1-(5-phosphoribosyl)-5-[(5-phosphoribosylamino)methylideneamino] imidazole-4-carboxamide isomerase.